Here is a 1782-residue protein sequence, read N- to C-terminus: Vitellogenin receptor (1782 aa).

A signal peptide spans 1–18 (MRFIVLLFICSFIYPCYV). Over 19 to 1663 (SSIGFRRISK…SINFSRNTRN (1645 aa)) the chain is Extracellular. LDL-receptor class A domains lie at 35–72 (KCED…FECD), 81–118 (TCAK…DGCV), and 122–157 (NCTN…WNCK). 6 disulfide bridges follow: C36–C48, C43–C61, C55–C71, C82–C94, C89–C107, and C101–C117. N-linked (GlcNAc...) asparagine glycosylation occurs at N122. Cystine bridges form between C123–C134, C129–C147, and C141–C156. A glycan (N-linked (GlcNAc...) asparagine) is linked at N159. The LDL-receptor class A 4 domain occupies 166–205 (SCKTENYQYMCANHRCISLKVVCDKKDDCGDGSDEGPGCT). Disulfide bonds link C167–C181, C176–C194, and C188–C204. N-linked (GlcNAc...) asparagine glycosylation is found at N208 and N239. One can recognise an EGF-like 1 domain in the interval 208–243 (NCSSAGCQSNCHQTPKGSVCTCKPGYKLQKDNRTCN). The EGF-like; calcium-binding domain occupies 244 to 283 (DIDECQAYGICDQDCMNVPGSYACTCQREYYLENDKRTCK). Disulfide bonds link C248/C258, C254/C267, and C269/C282. LDL-receptor class B repeat units lie at residues 327–374 (DYVY…DWIT), 375–416 (KNIY…LPTQ), 417–460 (GKMY…DYPN), 461–501 (ERLY…TVFQ), and 502–544 (NKLY…DHSA). An EGF-like 2 domain is found at 552-588 (PCYSNPCSQLCMLNQNKGYTCGCTLDKKLNADKHTCQ). N-linked (GlcNAc...) asparagine glycans are attached at residues N702, N859, N896, and N923. Residues 889 to 927 (DCQKNNGNCSHVCLPSLITSFICACPPGMELSNDNRTCI) form the EGF-like 3 domain. LDL-receptor class A domains lie at 931-969 (ECSK…SECR), 973-1009 (RCKE…QNCE), 1012-1049 (KCKS…EDCR), 1052-1090 (ECTS…EKCY), and 1094-1131 (ACKM…VHCL). Intrachain disulfides connect C932/C945, C939/C958, C952/C968, C974/C986, C981/C999, C993/C1008, C1013/C1026, C1020/C1039, C1033/C1048, C1053/C1065, C1060/C1078, C1072/C1089, C1095/C1108, C1103/C1121, and C1115/C1130. N1133 and N1140 each carry an N-linked (GlcNAc...) asparagine glycan. 3 consecutive LDL-receptor class A domains span residues 1140–1177 (NCSL…QNCT), 1178–1214 (YCFE…KNCD), and 1225–1260 (ECDE…GKCQ). Cystine bridges form between C1141/C1154, C1148/C1167, C1161/C1176, C1179/C1191, C1186/C1204, C1198/C1213, C1226/C1236, C1231/C1249, and C1243/C1259. N1175 carries N-linked (GlcNAc...) asparagine glycosylation. Residues 1262–1298 (ACTVNNFCKGMCYKTPAGAVCGCQSGYRLAVDMISCE) enclose the EGF-like 4 domain. LDL-receptor class B repeat units follow at residues 1385-1425 (DSVY…DWIT), 1471-1518 (RWLF…DHVK), and 1519-1561 (SKLY…FEQS). N-linked (GlcNAc...) asparagine glycans are attached at residues N1626, N1640, and N1656. Residues 1664–1684 (ISGIYSITIIVLLVSVLLLCV) form a helical membrane-spanning segment. The Cytoplasmic portion of the chain corresponds to 1685-1782 (YYYYQKNKLK…ALIYFVHNSK (98 aa)).

Expressed in ovaries of reproductive females.

The protein resides in the membrane. Its function is as follows. Involved in uptake of vitellogenin by endocytosis. Expression is regulated by the juvenile hormone analog, methoprene (in vitro). This chain is Vitellogenin receptor, found in Solenopsis invicta (Red imported fire ant).